We begin with the raw amino-acid sequence, 293 residues long: Shikimate dehydrogenase (NADP(+)) (293 aa).

Shikimate contacts are provided by residues 20 to 22 and threonine 72; that span reads SLT. The active-site Proton acceptor is lysine 76. Asparagine 97 and aspartate 112 together coordinate shikimate. NADP(+)-binding positions include 136–140 and isoleucine 230; that span reads GAGGA. Tyrosine 232 is a shikimate binding site. NADP(+) is bound at residue glycine 253.

Belongs to the shikimate dehydrogenase family. As to quaternary structure, homodimer.

The catalysed reaction is shikimate + NADP(+) = 3-dehydroshikimate + NADPH + H(+). It functions in the pathway metabolic intermediate biosynthesis; chorismate biosynthesis; chorismate from D-erythrose 4-phosphate and phosphoenolpyruvate: step 4/7. In terms of biological role, involved in the biosynthesis of the chorismate, which leads to the biosynthesis of aromatic amino acids. Catalyzes the reversible NADPH linked reduction of 3-dehydroshikimate (DHSA) to yield shikimate (SA). This is Shikimate dehydrogenase (NADP(+)) from Pseudarthrobacter chlorophenolicus (strain ATCC 700700 / DSM 12829 / CIP 107037 / JCM 12360 / KCTC 9906 / NCIMB 13794 / A6) (Arthrobacter chlorophenolicus).